The following is a 318-amino-acid chain: Rhomboid-related protein 4 (318 aa).

Over 1–21 (MQRRSRGINTGLILLLSQIFH) the chain is Cytoplasmic. A helical membrane pass occupies residues 22–42 (VGINNIPPVTLATLALNIWFF). Over 43-106 (LNPQKPLYSS…RRLGSRWFAY (64 aa)) the chain is Extracellular. A helical transmembrane segment spans residues 107 to 127 (VITTFSVLTGVVYLLLQFAVA). Residues 128 to 137 (EFMDEPDFKR) lie on the Cytoplasmic side of the membrane. The helical transmembrane segment at 138–154 (SCAVGFSGVLFALKVLN) threads the bilayer. Catalysis depends on S144, which acts as the Nucleophile. The Extracellular portion of the chain corresponds to 155–179 (NHYCPGGFVNILGFPVPNRFACWVE). The chain crosses the membrane as a helical span at residues 180–204 (LVAIHLFSPGTSFAGHQAGILVGLM). Residue H195 is part of the active site. The Cytoplasmic portion of the chain corresponds to 205-318 (YTQGPLKKIM…RQRLHRFDSQ (114 aa)). Residues 271-286 (SEEEQLERALQASLWD) are ubiquitin-binding domain (UBD). The tract at residues 285-318 (WDRGHTRNSPPPYGFHLSPEEEMRRQRLHRFDSQ) is disordered. The span at 302–318 (SPEEEMRRQRLHRFDSQ) shows a compositional bias: basic and acidic residues. Residues 303–318 (PEEEMRRQRLHRFDSQ) are VCP/p97-interacting motif (VIM).

The protein belongs to the peptidase S54 family. As to quaternary structure, interacts with BIK and STEAP3. Interacts (via C-terminal domain) with VCP. Interacts with ubiquitin and ubiquitinated proteins.

It localises to the endoplasmic reticulum membrane. The protein localises to the mitochondrion membrane. It catalyses the reaction Cleaves type-1 transmembrane domains using a catalytic dyad composed of serine and histidine that are contributed by different transmembrane domains.. Its activity is regulated as follows. Inhibited by aprotinin. In terms of biological role, intramembrane-cleaving serine protease that cleaves single transmembrane or multi-pass membrane proteins in the hydrophobic plane of the membrane, luminal loops and juxtamembrane regions. Involved in regulated intramembrane proteolysis and the subsequent release of functional polypeptides from their membrane anchors. Functional component of endoplasmic reticulum-associated degradation (ERAD) for misfolded membrane proteins. Required for the degradation process of some specific misfolded endoplasmic reticulum (ER) luminal proteins. Participates in the transfer of misfolded proteins from the ER to the cytosol, where they are destroyed by the proteasome in a ubiquitin-dependent manner. Functions in BIK, MPZ, PKD1, PTCRA, RHO, STEAP3 and TRAC processing. Involved in the regulation of exosomal secretion; inhibits the TSAP6-mediated secretion pathway. Involved in the regulation of apoptosis; modulates BIK-mediated apoptotic activity. Also plays a role in the regulation of spermatogenesis; inhibits apoptotic activity in spermatogonia. In Pongo abelii (Sumatran orangutan), this protein is Rhomboid-related protein 4 (RHBDD1).